Reading from the N-terminus, the 185-residue chain is Ribosome-recycling factor (185 aa).

Belongs to the RRF family.

It is found in the cytoplasm. In terms of biological role, responsible for the release of ribosomes from messenger RNA at the termination of protein biosynthesis. May increase the efficiency of translation by recycling ribosomes from one round of translation to another. This Corynebacterium aurimucosum (strain ATCC 700975 / DSM 44827 / CIP 107346 / CN-1) (Corynebacterium nigricans) protein is Ribosome-recycling factor.